Reading from the N-terminus, the 396-residue chain is Elongation factor Tu (396 aa).

The 196-residue stretch at 10–205 folds into the tr-type G domain; the sequence is KPHVNIGTIG…AVDESIPAPV (196 aa). Residues 19-26 are G1; it reads GHVDHGKT. Residue 19–26 coordinates GTP; sequence GHVDHGKT. Residue Thr-26 coordinates Mg(2+). A G2 region spans residues 62-66; sequence GITIN. The interval 83 to 86 is G3; it reads DAPG. Residues 83 to 87 and 138 to 141 each bind GTP; these read DAPGH and NKSD. Residues 138 to 141 are G4; that stretch reads NKSD. The tract at residues 175-177 is G5; it reads SAL.

Belongs to the TRAFAC class translation factor GTPase superfamily. Classic translation factor GTPase family. EF-Tu/EF-1A subfamily. As to quaternary structure, monomer.

It localises to the cytoplasm. It catalyses the reaction GTP + H2O = GDP + phosphate + H(+). In terms of biological role, GTP hydrolase that promotes the GTP-dependent binding of aminoacyl-tRNA to the A-site of ribosomes during protein biosynthesis. This chain is Elongation factor Tu, found in Mycobacterium leprae (strain Br4923).